The sequence spans 206 residues: Isopentenyl-diphosphate Delta-isomerase (206 aa).

Mn(2+)-binding residues include H44 and H51. In terms of domain architecture, Nudix hydrolase spans A49–L183. C86 is a catalytic residue. C86 is a Mg(2+) binding site. H88 lines the Mn(2+) pocket. A Mg(2+)-binding site is contributed by E106. The Mn(2+) site is built by E133 and E135. Residue E135 is part of the active site.

It belongs to the IPP isomerase type 1 family. It depends on Mg(2+) as a cofactor. Mn(2+) serves as cofactor.

The protein localises to the cytoplasm. The catalysed reaction is isopentenyl diphosphate = dimethylallyl diphosphate. Its pathway is isoprenoid biosynthesis; dimethylallyl diphosphate biosynthesis; dimethylallyl diphosphate from isopentenyl diphosphate: step 1/1. Its function is as follows. Catalyzes the 1,3-allylic rearrangement of the homoallylic substrate isopentenyl (IPP) to its highly electrophilic allylic isomer, dimethylallyl diphosphate (DMAPP). In Agromyces mediolanus (Corynebacterium mediolanum), this protein is Isopentenyl-diphosphate Delta-isomerase.